A 505-amino-acid chain; its full sequence is N-succinylglutamate 5-semialdehyde dehydrogenase (505 aa).

Residue 234–239 (GSAHTG) coordinates NAD(+). Active-site residues include E257 and C291.

Belongs to the aldehyde dehydrogenase family. AstD subfamily.

It catalyses the reaction N-succinyl-L-glutamate 5-semialdehyde + NAD(+) + H2O = N-succinyl-L-glutamate + NADH + 2 H(+). Its pathway is amino-acid degradation; L-arginine degradation via AST pathway; L-glutamate and succinate from L-arginine: step 4/5. Functionally, catalyzes the NAD-dependent reduction of succinylglutamate semialdehyde into succinylglutamate. The polypeptide is N-succinylglutamate 5-semialdehyde dehydrogenase (Yersinia pestis (strain Pestoides F)).